Reading from the N-terminus, the 225-residue chain is Late gene expression regulator BDLF4 (225 aa).

The tract at residues 1–20 (MSDQGRLSLPRGEGGTDEPN) is disordered.

It belongs to the herpesviridae UL92 family.

In terms of biological role, part of the viral pre-initiation complex (vPIC) that is responsible for the expression of vPIC-dependent late genes. vPIC is composed of at least BcRF1 that binds the viral TATT box, BDLF3.5, BDLF4, BFRF2, BGLF3, BGLF4 and BVLF1. The sequence is that of Late gene expression regulator BDLF4 from Homo sapiens (Human).